The sequence spans 291 residues: Phosphoribosylaminoimidazole-succinocarboxamide synthase (291 aa).

This sequence belongs to the SAICAR synthetase family.

It catalyses the reaction 5-amino-1-(5-phospho-D-ribosyl)imidazole-4-carboxylate + L-aspartate + ATP = (2S)-2-[5-amino-1-(5-phospho-beta-D-ribosyl)imidazole-4-carboxamido]succinate + ADP + phosphate + 2 H(+). The protein operates within purine metabolism; IMP biosynthesis via de novo pathway; 5-amino-1-(5-phospho-D-ribosyl)imidazole-4-carboxamide from 5-amino-1-(5-phospho-D-ribosyl)imidazole-4-carboxylate: step 1/2. This is Phosphoribosylaminoimidazole-succinocarboxamide synthase (ADE1) from Candida maltosa (Yeast).